The following is a 209-amino-acid chain: Na(+)-translocating NADH-quinone reductase subunit D (209 aa).

Helical transmembrane passes span 42–62 (LVMT…ISLI), 66–86 (IPNS…VIVV), 103–123 (VFVG…AYAM), 131–151 (FMDG…VGFV), and 178–198 (NGLF…IWGL).

The protein belongs to the NqrDE/RnfAE family. As to quaternary structure, composed of six subunits; NqrA, NqrB, NqrC, NqrD, NqrE and NqrF.

Its subcellular location is the cell inner membrane. The enzyme catalyses a ubiquinone + n Na(+)(in) + NADH + H(+) = a ubiquinol + n Na(+)(out) + NAD(+). Functionally, NQR complex catalyzes the reduction of ubiquinone-1 to ubiquinol by two successive reactions, coupled with the transport of Na(+) ions from the cytoplasm to the periplasm. NqrA to NqrE are probably involved in the second step, the conversion of ubisemiquinone to ubiquinol. The protein is Na(+)-translocating NADH-quinone reductase subunit D of Yersinia pseudotuberculosis serotype O:1b (strain IP 31758).